Here is a 215-residue protein sequence, read N- to C-terminus: Rod-determining factor A (215 aa).

Involved in cell-shape determination. Required for the formation of rods and wild-type-like motility. The polypeptide is Rod-determining factor A (Haloferax volcanii (strain ATCC 29605 / DSM 3757 / JCM 8879 / NBRC 14742 / NCIMB 2012 / VKM B-1768 / DS2) (Halobacterium volcanii)).